A 228-amino-acid chain; its full sequence is N-acylneuraminate cytidylyltransferase (228 aa).

It belongs to the CMP-NeuNAc synthase family.

Its subcellular location is the cytoplasm. The enzyme catalyses an N-acylneuraminate + CTP = a CMP-N-acyl-beta-neuraminate + diphosphate. The protein is N-acylneuraminate cytidylyltransferase (neuA) of Neisseria meningitidis serogroup B (strain ATCC BAA-335 / MC58).